The sequence spans 84 residues: Phosphoribosylformylglycinamidine synthase subunit PurS (84 aa).

Belongs to the PurS family. Homodimer or homotetramer. Part of the FGAM synthase complex composed of 1 PurL, 1 PurQ and 2 PurS subunits.

The protein localises to the cytoplasm. The enzyme catalyses N(2)-formyl-N(1)-(5-phospho-beta-D-ribosyl)glycinamide + L-glutamine + ATP + H2O = 2-formamido-N(1)-(5-O-phospho-beta-D-ribosyl)acetamidine + L-glutamate + ADP + phosphate + H(+). The protein operates within purine metabolism; IMP biosynthesis via de novo pathway; 5-amino-1-(5-phospho-D-ribosyl)imidazole from N(2)-formyl-N(1)-(5-phospho-D-ribosyl)glycinamide: step 1/2. In terms of biological role, part of the phosphoribosylformylglycinamidine synthase complex involved in the purines biosynthetic pathway. Catalyzes the ATP-dependent conversion of formylglycinamide ribonucleotide (FGAR) and glutamine to yield formylglycinamidine ribonucleotide (FGAM) and glutamate. The FGAM synthase complex is composed of three subunits. PurQ produces an ammonia molecule by converting glutamine to glutamate. PurL transfers the ammonia molecule to FGAR to form FGAM in an ATP-dependent manner. PurS interacts with PurQ and PurL and is thought to assist in the transfer of the ammonia molecule from PurQ to PurL. This is Phosphoribosylformylglycinamidine synthase subunit PurS from Bacillus subtilis (strain 168).